The sequence spans 470 residues: 3-oxo-isoapionate kinase (470 aa).

Substrate contacts are provided by Asp30 and Arg78. ATP-binding positions include Ser291, 403–406 (GGDS), and Gly451.

The protein belongs to the four-carbon acid sugar kinase family.

It catalyses the reaction 3-oxoisoapionate + ATP = 3-oxoisoapionate 4-phosphate + ADP + H(+). Its pathway is carbohydrate metabolism. Its function is as follows. Involved in catabolism of D-apiose. Catalyzes the phosphorylation of 3-oxo-isoapionate to 3-oxo-isoapionate 4-phosphate. The polypeptide is 3-oxo-isoapionate kinase (Paraburkholderia graminis (strain ATCC 700544 / DSM 17151 / LMG 18924 / NCIMB 13744 / C4D1M)).